The chain runs to 501 residues: Glycerol kinase (501 aa).

T16 is an ADP binding site. ATP contacts are provided by T16, T17, and S18. Residue T16 participates in sn-glycerol 3-phosphate binding. R20 contacts ADP. Sn-glycerol 3-phosphate-binding residues include R84, E85, Y135, and D242. The glycerol site is built by R84, E85, Y135, D242, and Q243. T264 and G307 together coordinate ADP. Positions 264, 307, 311, and 408 each coordinate ATP. An ADP-binding site is contributed by G408.

It belongs to the FGGY kinase family.

It carries out the reaction glycerol + ATP = sn-glycerol 3-phosphate + ADP + H(+). It functions in the pathway polyol metabolism; glycerol degradation via glycerol kinase pathway; sn-glycerol 3-phosphate from glycerol: step 1/1. In terms of biological role, key enzyme in the regulation of glycerol uptake and metabolism. Catalyzes the phosphorylation of glycerol to yield sn-glycerol 3-phosphate. In Saccharolobus islandicus (strain L.S.2.15 / Lassen #1) (Sulfolobus islandicus), this protein is Glycerol kinase.